We begin with the raw amino-acid sequence, 479 residues long: Protein ORD (479 aa).

The interval 102–140 (KEEETEPESESDLDEGPSTSKQALERMVQRAERKAKEAS) is disordered. Positions 104-116 (EETEPESESDLDE) are enriched in acidic residues. Basic and acidic residues predominate over residues 124–140 (ALERMVQRAERKAKEAS).

Interacts with Sce.

Its subcellular location is the nucleus. It localises to the chromosome. The protein localises to the centromere. Essential for proper maintenance of sister-chromatid cohesion in both male and female meiosis. Mutations in ord cause premature separation of the sister chromatids in meiosis I and random segregation in both meiotic divisions. Required for chiasma maintenance in female meiosis. Mutations in ord reduce recombination in female meiosis. The chain is Protein ORD (ord) from Drosophila melanogaster (Fruit fly).